The following is a 396-amino-acid chain: B2 bradykinin receptor (396 aa).

The Extracellular portion of the chain corresponds to 1–65 (MDTRSSLCPK…EWWSWLNAIQ (65 aa)). N-linked (GlcNAc...) asparagine glycans are attached at residues Asn33 and Asn44. The chain crosses the membrane as a helical span at residues 66–89 (APFLWVLFLLAALENIFVLSVFCL). The Cytoplasmic segment spans residues 90–98 (HKTNCTVAE). The chain crosses the membrane as a helical span at residues 99–123 (IYLGNLAAADLILACGLPFWAITIA). Topologically, residues 124-136 (NNFDWLFGEVLCR) are extracellular. An intrachain disulfide couples Cys135 to Cys216. Residues 137–158 (VVNTMIYMNLYSSICFLMLVSI) traverse the membrane as a helical segment. Residues 159–180 (DRYLALVKTMSMGRMRGVRWAK) are Cytoplasmic-facing. Tyr161 bears the Phosphotyrosine mark. The helical transmembrane segment at 181 to 203 (LYSLVIWSCTLLLSSPMLVFRTM) threads the bilayer. Residues 204–226 (KDYREEGHNVTACVIVYPSRSWE) are Extracellular-facing. Asn212 carries an N-linked (GlcNAc...) asparagine glycan. The helical transmembrane segment at 227–253 (VFTNMLLNLVGFLLPLSIITFCTVRIM) threads the bilayer. At 254 to 272 (QVLRNNEMKKFKEVQTEKK) the chain is on the cytoplasmic side. A helical transmembrane segment spans residues 273–297 (ATVLVLAVLGLFVLCWFPFQISTFL). Residues 298-316 (DTLLRLGVLSGCWNERAVD) lie on the Extracellular side of the membrane. Residues 317-340 (IVTQISSYVAYSNSCLNPLVYVIV) traverse the membrane as a helical segment. Topologically, residues 341–396 (GKRFRKKSREVYQAICRKGGCMGESVQMENSMGTLRTSISVDRQIHKLQDWAGNKQ) are cytoplasmic. Phosphotyrosine is present on Tyr352. Residue Cys356 is the site of S-palmitoyl cysteine attachment. Ser365 and Ser371 each carry phosphoserine. Residue Thr374 is modified to Phosphothreonine. Ser378 and Ser380 each carry phosphoserine; by GRK6.

The protein belongs to the G-protein coupled receptor 1 family. Bradykinin receptor subfamily. BDKRB2 sub-subfamily. As to quaternary structure, forms a complex with PECAM1 and GNAQ. Interacts with PECAM1. In terms of processing, diphosphorylation at Ser-365 and Ser-371, at Ser-378 and Ser-380, and at Thr-374 and Ser-380 seem to be correlated pairwise. Palmitoylation at Cys-356 and phosphorylation at Tyr-352 seem to be mutually exclusive. Uterus, vas deferens, kidney, ileum, heart, testis, lung and brain.

Its subcellular location is the cell membrane. Functionally, receptor for bradykinin. It is associated with G proteins that activate a phosphatidylinositol-calcium second messenger system. This chain is B2 bradykinin receptor (Bdkrb2), found in Rattus norvegicus (Rat).